Reading from the N-terminus, the 387-residue chain is Succinate--CoA ligase [ADP-forming] subunit beta (387 aa).

In terms of domain architecture, ATP-grasp spans 9–245 (KDLLESYGLK…KSQENAKELK (237 aa)). ATP is bound by residues K46, 53 to 55 (GRG), E100, Y103, and E108. Mg(2+) contacts are provided by N200 and D214. Substrate contacts are provided by residues N265 and 322-324 (GIV).

This sequence belongs to the succinate/malate CoA ligase beta subunit family. As to quaternary structure, heterotetramer of two alpha and two beta subunits. It depends on Mg(2+) as a cofactor.

The enzyme catalyses succinate + ATP + CoA = succinyl-CoA + ADP + phosphate. The catalysed reaction is GTP + succinate + CoA = succinyl-CoA + GDP + phosphate. It participates in carbohydrate metabolism; tricarboxylic acid cycle; succinate from succinyl-CoA (ligase route): step 1/1. Its function is as follows. Succinyl-CoA synthetase functions in the citric acid cycle (TCA), coupling the hydrolysis of succinyl-CoA to the synthesis of either ATP or GTP and thus represents the only step of substrate-level phosphorylation in the TCA. The beta subunit provides nucleotide specificity of the enzyme and binds the substrate succinate, while the binding sites for coenzyme A and phosphate are found in the alpha subunit. This Francisella tularensis subsp. holarctica (strain FTNF002-00 / FTA) protein is Succinate--CoA ligase [ADP-forming] subunit beta.